Reading from the N-terminus, the 334-residue chain is Galactosylgalactosylxylosylprotein 3-beta-glucuronosyltransferase 1 (334 aa).

The Cytoplasmic segment spans residues 1 to 6 (MPKRRD). Residues 3-5 (KRR) are essential for transport from endoplasmic reticulum to Golgi apparatus and interaction with SAR1A. A helical; Signal-anchor for type II membrane protein membrane pass occupies residues 7–27 (ILAIVLIVLPWTLLITVWHQS). Topologically, residues 28–334 (SLAPLLAVHK…KGFTDPSVEI (307 aa)) are lumenal. 91–93 (PTY) serves as a coordination point for UDP-alpha-D-glucuronate. Phosphothreonine is present on residues Thr-103 and Thr-108. Asp-122 serves as a coordination point for UDP-alpha-D-glucuronate. N-linked (GlcNAc...) asparagine glycosylation is present at Asn-140. 2 residues coordinate UDP-alpha-D-glucuronate: Arg-165 and Arg-170. A glycan (N-linked (GlcNAc...) asparagine) is linked at Asn-184. 195 to 197 (DDD) lines the UDP-alpha-D-glucuronate pocket. Residue Asp-197 participates in Mn(2+) binding. Positions 245 to 254 (FDPHRPFAID) are interaction with galactose moiety of substrate glycoprotein. Glu-284 acts as the Proton donor/acceptor in catalysis. N-linked (GlcNAc...) asparagine glycosylation is present at Asn-303. 311-313 (HTR) is a UDP-alpha-D-glucuronate binding site.

It belongs to the glycosyltransferase 43 family. In terms of assembly, homodimer. Interacts with SAR1A. It depends on Mn(2+) as a cofactor. The soluble form derives from the membrane form by proteolytic processing.

It localises to the golgi apparatus membrane. The protein localises to the secreted. The protein resides in the endoplasmic reticulum membrane. The catalysed reaction is 3-O-(beta-D-galactosyl-(1-&gt;3)-beta-D-galactosyl-(1-&gt;4)-beta-D-xylosyl)-L-seryl-[protein] + UDP-alpha-D-glucuronate = 3-O-(beta-D-GlcA-(1-&gt;3)-beta-D-Gal-(1-&gt;3)-beta-D-Gal-(1-&gt;4)-beta-D-Xyl)-L-seryl-[protein] + UDP + H(+). The protein operates within protein modification; protein glycosylation. Involved in the biosynthesis of L2/HNK-1 carbohydrate epitope on glycoproteins. Can also play a role in glycosaminoglycan biosynthesis. Substrates include asialo-orosomucoid (ASOR), asialo-fetuin, and asialo-neural cell adhesion molecule. Requires sphingomyelin for activity: stearoyl-sphingomyelin was the most effective, followed by palmitoyl-sphingomyelin and lignoceroyl-sphingomyelin. Activity was demonstrated only for sphingomyelin with a saturated fatty acid and not for that with an unsaturated fatty acid, regardless of the length of the acyl group. This is Galactosylgalactosylxylosylprotein 3-beta-glucuronosyltransferase 1 from Mus musculus (Mouse).